A 134-amino-acid polypeptide reads, in one-letter code: Profilin-1 (134 aa).

C13 and C118 are oxidised to a cystine. The short motif at 84 to 100 (AVIRGKKGSGGITIKKT) is the Involved in PIP2 interaction element. Phosphothreonine is present on T114.

It belongs to the profilin family. As to quaternary structure, occurs in many kinds of cells as a complex with monomeric actin in a 1:1 ratio. Phosphorylated by MAP kinases.

The protein localises to the cytoplasm. It localises to the cytoskeleton. In terms of biological role, binds to actin and affects the structure of the cytoskeleton. At high concentrations, profilin prevents the polymerization of actin, whereas it enhances it at low concentrations. This chain is Profilin-1, found in Olea europaea (Common olive).